The primary structure comprises 199 residues: Octanoyltransferase (199 aa).

In terms of domain architecture, BPL/LPL catalytic spans 27–199 (SNSCDELWLL…FVQYFLTQFK (173 aa)). Residues 66–73 (RGGQVTYH), 133–135 (SIG), and 146–148 (GIA) each bind substrate. C164 functions as the Acyl-thioester intermediate in the catalytic mechanism.

It belongs to the LipB family.

It localises to the cytoplasm. The enzyme catalyses octanoyl-[ACP] + L-lysyl-[protein] = N(6)-octanoyl-L-lysyl-[protein] + holo-[ACP] + H(+). The protein operates within protein modification; protein lipoylation via endogenous pathway; protein N(6)-(lipoyl)lysine from octanoyl-[acyl-carrier-protein]: step 1/2. Functionally, catalyzes the transfer of endogenously produced octanoic acid from octanoyl-acyl-carrier-protein onto the lipoyl domains of lipoate-dependent enzymes. Lipoyl-ACP can also act as a substrate although octanoyl-ACP is likely to be the physiological substrate. The polypeptide is Octanoyltransferase (Legionella pneumophila (strain Corby)).